We begin with the raw amino-acid sequence, 685 residues long: MTSLSSLLPKPKNVYSNEEEDPLFQPKPKPQQQKQQQQQQQELNDKPKKVIPTYGNRKGYLPKNIEDFGDGGAFPEIHIVQYPLDMGRKGKSKSSNSNTSNMNGGGTTTSIVPVSVDSTGRVKHEAILGEKGSLHSQYKDLIPKQHTEHELQRPDDDELQETLDRTKNALEKIVNGKIKSSKSTNYVEVEKKSATYIKYTPSNQLGSNNGSALNSKIVRMVDVAQDPLEPPKYKIKKKIMEHGSPPAPVMHSPTRKLSVQDQQDWTIPPCVSNWKNPKGFAISIDKRLVSNGGGLQDVEINDKFAHFTQALYIAESNAREEVSARAELERKLAQKEKERKQDMLRKLAEDVRNERSGIIQQRYTRKDNSDSDNDNDNDSSSDEDKNKRTPPMNRRSRSRSTERIPSRNDNDDDDDRYRIKDNRDNRGRDNIDSRDNRDSRDSRDSRDSRDSRDSRDSRDNRDSRDSRDNRDNRDNRRRDDSNDRDRYSKRRSDSDSDSDSDSSDSEDERVRRERKEKLERDKIRMEKKRELEREYRLEASGKKSKFNRDQDRDISEKIALGQASIKRTEDSIYDQRLFNQSESLTSGFGNDDSYNVYSKPLFGGAVSNSIYRPKSNQEDNTSIQDVLSNSRFGKEGGSGSGGVPRPNKEFSGTDRSKDRTGPVAFEKEKKKSDDPFGFDDFSKKR.

4 disordered regions span residues 1 to 62, 88 to 112, 347 to 573, and 605 to 685; these read MTSL…GYLP, RKGK…TSIV, LAED…DSIY, and AVSN…SKKR. Composition is skewed to low complexity over residues 30 to 41 and 93 to 102; these read PQQQKQQQQQQQ and KSSNSNTSNM. An SNW region spans residues 194 to 360; that stretch reads ATYIKYTPSN…VRNERSGIIQ (167 aa). The segment covering 370-381 has biased composition (acidic residues); that stretch reads DSDNDNDNDSSS. Residues 399-494 show a composition bias toward basic and acidic residues; the sequence is RSTERIPSRN…DRYSKRRSDS (96 aa). Over residues 495–507 the composition is skewed to acidic residues; it reads DSDSDSDSSDSED. Residues 508-556 show a composition bias toward basic and acidic residues; the sequence is ERVRRERKEKLERDKIRMEKKRELEREYRLEASGKKSKFNRDQDRDISE. A compositionally biased stretch (polar residues) spans 618–631; the sequence is EDNTSIQDVLSNSR. Basic and acidic residues predominate over residues 646–685; it reads PNKEFSGTDRSKDRTGPVAFEKEKKKSDDPFGFDDFSKKR.

Belongs to the SNW family. Interacts with cypE.

The protein localises to the nucleus. The protein is Protein snwA (snwA) of Dictyostelium discoideum (Social amoeba).